Reading from the N-terminus, the 310-residue chain is Ceramide synthase LOH1 (310 aa).

6 helical membrane passes run 16–36, 85–105, 131–151, 157–177, 216–236, and 260–280; these read SFPT…FPTI, CIYY…EPWF, FLYM…VFWE, FGVS…SYIC, FVLF…FWIL, and YMFN…WVLI. The TLC domain maps to 76-289; it reads RKFKESAWKC…IYRMLVKQVQ (214 aa). Phosphoserine occurs at positions 300 and 302.

As to expression, expressed ubiquitously at high levels. Not observed in pollen.

The protein localises to the endoplasmic reticulum membrane. The enzyme catalyses (4R)-hydroxysphinganine + a fatty acyl-CoA = an N-acyl-(4R)-4-hydroxysphinganine + CoA + H(+). It catalyses the reaction hexacosanoyl-CoA + (4R)-hydroxysphinganine = N-hexacosanoyl-(4R)-hydroxysphinganine + CoA + H(+). The catalysed reaction is tetracosanoyl-CoA + (4R)-hydroxysphinganine = N-tetracosanoyl-(4R)-hydroxysphinganine + CoA + H(+). It functions in the pathway sphingolipid metabolism. Its activity is regulated as follows. Inhibited by the mycotoxin fumonisin B(1), a sphingosine analog mycotoxins produced by pathogenic fungi. Repressed by divalent cation such as magnesium Mg(2+), copper Cu(2+), zinc Zn(2+), manganese Mn(2+), calcium Ca(2+) and cobalt Co(2+). In terms of biological role, essential for plant growth, promotes cell division in root meristems. Catalyzes the biosynthesis of ceramide sphingolipids with C(16) to C(28) fatty acids, structural membrane lipids involved in membrane trafficking (e.g. early endosomes) and cell polarity (e.g. polar auxin transport related proteins); mostly active with t18:0 and saturated very long saturated fatty acids (C24:0 and C26:0), such as long-chain base (LCB) phytosphingosine (t18:0), lignoceroyl- and hexacosanoyl-CoAs. Mediates resistance to sphinganine-analog mycotoxins (SAMs, e.g. fumonisin B(1)) by restoring the sphingolipid biosynthesis. Could salvage the transport of GPI-anchored proteins from the endoplasmic reticulum to the Golgi apparatus in ceramides-depleted cells after SAM exposure. May prevent precocious cell death by delaying PR1 accumulation during aging. Contributes to hypoxic conditions tolerance (e.g. submergences), especially in the dark, by promoting the formation of very-long-chain (VLC) ceramide species (22:1, 24:1 and 26:1) and of VLC unsaturated ceramides, which are modulating CTR1-mediated ethylene signaling leading to endoplasmic reticulum (ER)-to-nucleus translocation of EIN2 and EIN3. This Arabidopsis thaliana (Mouse-ear cress) protein is Ceramide synthase LOH1.